The primary structure comprises 105 residues: MSKIHVRKKDTVVVISGKDKSKIGEVLSVLPKKGKVIVKDVNVVTKHQKPNRENMQGGIIHKEAPIFSSKVMLYCDKCKSATRISNKILEDGTKVRVCKKCGETF.

Belongs to the universal ribosomal protein uL24 family. In terms of assembly, part of the 50S ribosomal subunit.

Functionally, one of two assembly initiator proteins, it binds directly to the 5'-end of the 23S rRNA, where it nucleates assembly of the 50S subunit. Its function is as follows. One of the proteins that surrounds the polypeptide exit tunnel on the outside of the subunit. The sequence is that of Large ribosomal subunit protein uL24 from Clostridium botulinum (strain ATCC 19397 / Type A).